Here is a 171-residue protein sequence, read N- to C-terminus: 3-hydroxydecanoyl-[acyl-carrier-protein] dehydratase (171 aa).

Histidine 70 is an active-site residue.

Belongs to the thioester dehydratase family. FabA subfamily. As to quaternary structure, homodimer.

It localises to the cytoplasm. It carries out the reaction a (3R)-hydroxyacyl-[ACP] = a (2E)-enoyl-[ACP] + H2O. It catalyses the reaction (3R)-hydroxydecanoyl-[ACP] = (2E)-decenoyl-[ACP] + H2O. The enzyme catalyses (2E)-decenoyl-[ACP] = (3Z)-decenoyl-[ACP]. It functions in the pathway lipid metabolism; fatty acid biosynthesis. Necessary for the introduction of cis unsaturation into fatty acids. Catalyzes the dehydration of (3R)-3-hydroxydecanoyl-ACP to E-(2)-decenoyl-ACP and then its isomerization to Z-(3)-decenoyl-ACP. Can catalyze the dehydratase reaction for beta-hydroxyacyl-ACPs with saturated chain lengths up to 16:0, being most active on intermediate chain length. The chain is 3-hydroxydecanoyl-[acyl-carrier-protein] dehydratase from Xanthomonas axonopodis pv. citri (strain 306).